Consider the following 69-residue polypeptide: Putative membrane protein insertion efficiency factor (69 aa).

This sequence belongs to the UPF0161 family.

The protein resides in the cell inner membrane. Its function is as follows. Could be involved in insertion of integral membrane proteins into the membrane. The sequence is that of Putative membrane protein insertion efficiency factor from Nitrosomonas europaea (strain ATCC 19718 / CIP 103999 / KCTC 2705 / NBRC 14298).